Consider the following 1762-residue polypeptide: MECCRRATPGTLLLFLAFLLLSSRTARSEEDRDGLWDAWGPWSECSRTCGGGASYSLRRCLSSKSCEGRNIRYRTCSNVDCPPEAGDFRAQQCSAHNDVKHHGQFYEWLPVSNDPDNPCSLKCQAKGTTLVVELAPKVLDGTRCYTESLDMCISGLCQIVGCDHQLGSTVKEDNCGVCNGDGSTCRLVRGQYKSQLSATKSDDTVVAIPYGSRHIRLVLKGPDHLYLETKTLQGTKGENSLSSTGTFLVDNSSVDFQKFPDKEILRMAGPLTADFIVKIRNSGSADSTVQFIFYQPIIHRWRETDFFPCSATCGGGYQLTSAECYDLRSNRVVADQYCHYYPENIKPKPKLQECNLDPCPASDGYKQIMPYDLYHPLPRWEATPWTACSSSCGGGIQSRAVSCVEEDIQGHVTSVEEWKCMYTPKMPIAQPCNIFDCPKWLAQEWSPCTVTCGQGLRYRVVLCIDHRGMHTGGCSPKTKPHIKEECIVPTPCYKPKEKLPVEAKLPWFKQAQELEEGAAVSEEPSFIPEAWSACTVTCGVGTQVRIVRCQVLLSFSQSVADLPIDECEGPKPASQRACYAGPCSGEIPEFNPDETDGLFGGLQDFDELYDWEYEGFTKCSESCGGGVQEAVVSCLNKQTREPAEENLCVTSRRPPQLLKSCNLDPCPARWEIGKWSPCSLTCGVGLQTRDVFCSHLLSREMNETVILADELCRQPKPSTVQACNRFNCPPAWYPAQWQPCSRTCGGGVQKREVLCKQRMADGSFLELPETFCSASKPACQQACKKDDCPSEWLLSDWTECSTSCGEGTQTRSAICRKMLKTGLSTVVNSTLCPPLPFSSSIRPCMLATCARPGRPSTKHSPHIAAARKVYIQTRRQRKLHFVVGGFAYLLPKTAVVLRCPARRVRKPLITWEKDGQHLISSTHVTVAPFGYLKIHRLKPSDAGVYTCSAGPAREHFVIKLIGGNRKLVARPLSPRSEEEVLAGRKGGPKEALQTHKHQNGIFSNGSKAEKRGLAANPGSRYDDLVSRLLEQGGWPGELLASWEAQDSAERNTTSEEDPGAEQVLLHLPFTMVTEQRRLDDILGNLSQQPEELRDLYSKHLVAQLAQEIFRSHLEHQDTLLKPSERRTSPVTLSPHKHVSGFSSSLRTSSTGDAGGGSRRPHRKPTILRKISAAQQLSASEVVTHLGQTVALASGTLSVLLHCEAIGHPRPTISWARNGEEVQFSDRILLQPDDSLQILAPVEADVGFYTCNATNALGYDSVSIAVTLAGKPLVKTSRMTVINTEKPAVTVDIGSTIKTVQGVNVTINCQVAGVPEAEVTWFRNKSKLGSPHHLHEGSLLLTNVSSSDQGLYSCRAANLHGELTESTQLLILDPPQVPTQLEDIRALLAATGPNLPSVLTSPLGTQLVLDPGNSALLGCPIKGHPVPNITWFHGGQPIVTATGLTHHILAAGQILQVANLSGGSQGEFSCLAQNEAGVLMQKASLVIQDYWWSVDRLATCSASCGNRGVQQPRLRCLLNSTEVNPAHCAGKVRPAVQPIACNRRDCPSRWMVTSWSACTRSCGGGVQTRRVTCQKLKASGISTPVSNDMCTQVAKRPVDTQACNQQLCVEWAFSSWGQCNGPCIGPHLAVQHRQVFCQTRDGITLPSEQCSALPRPVSTQNCWSEACSVHWRVSLWTLCTATCGNYGFQSRRVECVHARTNKAVPEHLCSWGPRPANWQRCNITPCENMECRDTTRYCEKVKQLKLCQLSQFKSRCCGTCGKA.

Positions 1–28 (MECCRRATPGTLLLFLAFLLLSSRTARS) are cleaved as a signal peptide. A TSP type-1 1 domain is found at 33–82 (DGLWDAWGPWSECSRTCGGGASYSLRRCLSSKSCEGRNIRYRTCSNVDCP). C-linked (Man) tryptophan glycans are attached at residues Trp39 and Trp42. Cystine bridges form between Cys45–Cys76, Cys49–Cys81, and Cys60–Cys66. Thr48 is a glycosylation site (O-linked (Fuc...) threonine). An N-linked (GlcNAc...) asparagine glycan is attached at Asn251. Thr312 carries an O-linked (Fuc...) threonine glycan. 6 consecutive TSP type-1 domains span residues 376-424 (PLPR…MYTP), 436-493 (DCPK…TPCY), 522-584 (EEPS…GPCS), 607-665 (ELYD…NLDP), 666-729 (CPAR…FNCP), and 788-850 (CPSE…ATCA). The O-linked (Fuc...) serine glycan is linked to Ser391. An O-linked (Fuc...) threonine glycan is attached at Thr451. Cystine bridges form between Cys534–Cys578, Cys538–Cys583, and Cys549–Cys567. 7 disulfide bridges follow: Cys678/Cys723, Cys682/Cys728, Cys693/Cys712, Cys800/Cys844, Cys804/Cys849, Cys815/Cys832, and Cys899/Cys947. The 103-residue stretch at 861–963 (PHIAAARKVY…EHFVIKLIGG (103 aa)) folds into the Ig-like C2-type 1 domain. A disordered region spans residues 1120-1164 (LKPSERRTSPVTLSPHKHVSGFSSSLRTSSTGDAGGGSRRPHRKP). Low complexity predominate over residues 1139–1151 (SGFSSSLRTSSTG). 3 Ig-like C2-type domains span residues 1164–1266 (PTIL…IAVT), 1286–1369 (PAVT…TQLL), and 1395–1485 (PSVL…ASLV). 3 disulfides stabilise this stretch: Cys1202/Cys1250, Cys1308/Cys1353, and Cys1418/Cys1469. TSP type-1 domains follow at residues 1545–1608 (CPSR…QLCV) and 1666–1726 (CSVH…TPCE). The PLAC domain occupies 1726–1762 (ENMECRDTTRYCEKVKQLKLCQLSQFKSRCCGTCGKA).

As to quaternary structure, monomer. In terms of processing, C-, N- and O-glycosylated. O-fucosylated by POFUT2 on a serine or a threonine residue found within the consensus sequence C1-X(2)-(S/T)-C2-G of the TSP type-1 repeat domains where C1 and C2 are the first and second cysteine residue of the repeat, respectively. Fucosylated repeats can then be further glycosylated by the addition of a beta-1,3-glucose residue by the glucosyltransferase, B3GALTL. Fucosylation mediates the efficient secretion of ADAMTSL1. Can also be C-glycosylated with one or two mannose molecules on tryptophan residues within the consensus sequence W-X-X-W of the TPRs, and N-glycosylated. These other glycosylations can also facilitate secretion. Post-translationally, disulfide bonds are present. In terms of tissue distribution, expressed primarily in adult skeletal muscle.

Its subcellular location is the secreted. The protein localises to the extracellular space. It localises to the extracellular matrix. The polypeptide is ADAMTS-like protein 1 (ADAMTSL1) (Homo sapiens (Human)).